The sequence spans 322 residues: HPr kinase/phosphorylase (322 aa).

Catalysis depends on residues histidine 146 and lysine 167. 161–168 (GDSGLGKS) is a binding site for ATP. Residue serine 168 coordinates Mg(2+). Aspartate 185 functions as the Proton acceptor; for phosphorylation activity. Proton donor; for dephosphorylation activity in the catalytic mechanism. The segment at 209-218 (LEVRGLGLLD) is important for the catalytic mechanism of both phosphorylation and dephosphorylation. A Mg(2+)-binding site is contributed by glutamate 210. Residue arginine 250 is part of the active site. The interval 271 to 276 (QVAAGR) is important for the catalytic mechanism of dephosphorylation.

This sequence belongs to the HPrK/P family. Homohexamer. Requires Mg(2+) as cofactor.

It carries out the reaction [HPr protein]-L-serine + ATP = [HPr protein]-O-phospho-L-serine + ADP + H(+). The catalysed reaction is [HPr protein]-O-phospho-L-serine + phosphate + H(+) = [HPr protein]-L-serine + diphosphate. In terms of biological role, catalyzes the ATP- as well as the pyrophosphate-dependent phosphorylation of a specific serine residue in HPr, a phosphocarrier protein of the phosphoenolpyruvate-dependent sugar phosphotransferase system (PTS). HprK/P also catalyzes the pyrophosphate-producing, inorganic phosphate-dependent dephosphorylation (phosphorolysis) of seryl-phosphorylated HPr (P-Ser-HPr). In Paraburkholderia xenovorans (strain LB400), this protein is HPr kinase/phosphorylase.